The following is a 380-amino-acid chain: Cytochrome b (380 aa).

4 helical membrane passes run 34-54, 78-99, 114-134, and 179-199; these read FGSL…FLAM, WLVR…YLHI, WNIG…GYVL, and FFAF…LHLL. The heme b site is built by histidine 84 and histidine 98. Residues histidine 183 and histidine 197 each coordinate heme b. A ubiquinone is bound at residue histidine 202. Helical transmembrane passes span 227–247, 289–309, 321–341, and 348–368; these read YKDT…SMLS, LGGV…PMIH, MTQF…WIGG, and FIEI…IFMP.

Belongs to the cytochrome b family. The cytochrome bc1 complex contains 3 respiratory subunits (MT-CYB, CYC1 and UQCRFS1), 2 core proteins (UQCRC1 and UQCRC2) and probably 6 low-molecular weight proteins. It depends on heme b as a cofactor.

Its subcellular location is the mitochondrion inner membrane. Component of the ubiquinol-cytochrome c reductase complex (complex III or cytochrome b-c1 complex) that is part of the mitochondrial respiratory chain. The b-c1 complex mediates electron transfer from ubiquinol to cytochrome c. Contributes to the generation of a proton gradient across the mitochondrial membrane that is then used for ATP synthesis. The protein is Cytochrome b (mt-cyb) of Ranodon sibiricus (Siberian salamander).